The chain runs to 81 residues: UPF0248 protein SSO2687 (81 aa).

Belongs to the UPF0248 family.

This Saccharolobus solfataricus (strain ATCC 35092 / DSM 1617 / JCM 11322 / P2) (Sulfolobus solfataricus) protein is UPF0248 protein SSO2687.